The chain runs to 385 residues: 3-hydroxyisobutyryl-CoA hydrolase, mitochondrial (385 aa).

Glu120, Gly145, Glu168, and Asp176 together coordinate substrate.

It belongs to the enoyl-CoA hydratase/isomerase family.

The protein resides in the mitochondrion. It catalyses the reaction 3-hydroxy-2-methylpropanoyl-CoA + H2O = 3-hydroxy-2-methylpropanoate + CoA + H(+). It functions in the pathway amino-acid degradation; L-valine degradation. In terms of biological role, hydrolyzes 3-hydroxyisobutyryl-CoA (HIBYL-CoA), a saline catabolite. Has high activity toward isobutyryl-CoA. Could be an isobutyryl-CoA dehydrogenase that functions in valine catabolism. Also hydrolyzes 3-hydroxypropanoyl-CoA. The protein is 3-hydroxyisobutyryl-CoA hydrolase, mitochondrial (hibch) of Xenopus tropicalis (Western clawed frog).